We begin with the raw amino-acid sequence, 465 residues long: MTISQHRFRSNANASIISMLQRFSDILIIFLGIYFSCFINDYFFNLHYVLMALVALVVFQMIGGITDFYRSWRGVEFSVELILILKNWSLSFLLTLGFVTLFSDFDLTFRTFIFWYLAVCAGFVVTRPLIRALAGFFRRIGYNKRRVAFAGSLPAGISLLETFRKQPWLGFEVKGIYEDSFSGTYDLELYAGKISDLINEARKGTIDRIYIAMHMRDEVAIKNMVSQLTDTTCSVLYIPDVFTFNILQSRTEEINGVPVVPLFDSPLNGINMVFKRLEDIIVSSLILILISPILLVIATAVKTTSKGPVIFRQVRYGMDGKPIKVWKFRSMTVMENDDKVIQATKNDIRVTKVGKFLRSTSLDELPQFFNVLFGQMSVVGPRPHAVSHNEQYRSLIQGYMLRHKVKPGITGLAQINGWRGETDTLEKMEKRIEYDLLYIRGWSIWLDLKIIFLTVFKGFINKSAY.

Helical transmembrane passes span phenylalanine 23–phenylalanine 43, leucine 46–threonine 66, isoleucine 82–phenylalanine 102, phenylalanine 105–valine 125, and isoleucine 280–alanine 300.

Belongs to the bacterial sugar transferase family.

The protein localises to the cell inner membrane. It carries out the reaction di-trans,octa-cis-undecaprenyl phosphate + UDP-alpha-D-glucose = alpha-D-glucosyl di-trans,octa-cis-undecaprenyl diphosphate + UMP. Its pathway is capsule biogenesis; capsule polysaccharide biosynthesis. Is likely the initiating enzyme for the K2 capsular polysaccharide synthesis. Catalyzes the transfer of the glucose-1-phosphate moiety from UDP-Glc onto the carrier lipid undecaprenyl phosphate (C55-P), forming a phosphoanhydride bond yielding to glucosyl-pyrophosphoryl-undecaprenol (Glc-PP-C55). This chain is UDP-glucose:undecaprenyl-phosphate glucose-1-phosphate transferase, found in Klebsiella pneumoniae.